Reading from the N-terminus, the 187-residue chain is Large ribosomal subunit protein bL25 (187 aa).

It belongs to the bacterial ribosomal protein bL25 family. CTC subfamily. Part of the 50S ribosomal subunit; part of the 5S rRNA/L5/L18/L25 subcomplex. Contacts the 5S rRNA. Binds to the 5S rRNA independently of L5 and L18.

Its function is as follows. This is one of the proteins that binds to the 5S RNA in the ribosome where it forms part of the central protuberance. In Tropheryma whipplei (strain TW08/27) (Whipple's bacillus), this protein is Large ribosomal subunit protein bL25.